The primary structure comprises 457 residues: UDP-glycosyltransferase 708C1 (457 aa).

G31 lines the UDP-alpha-D-glucose pocket. H32 (proton acceptor) is an active-site residue. H32 contributes to the an anthocyanidin binding site. Position 34 (T34) interacts with UDP-alpha-D-glucose. N94 contributes to the an anthocyanidin binding site. Catalysis depends on D129, which acts as the Charge relay. T150 provides a ligand contact to UDP-alpha-D-glucose. The UDP stretch occupies residues 279–280 (NR). UDP-alpha-D-glucose contacts are provided by V341, Q343, H358, W361, N362, S363, and E366. G381 is a binding site for an anthocyanidin. 2 residues coordinate UDP-alpha-D-glucose: D382 and Q383.

The protein belongs to the UDP-glycosyltransferase family. In terms of tissue distribution, expressed in cotyledons. Not detected in flowers, leaves, roots and hypocotyls.

The enzyme catalyses a 3'-hydro-2'-hydroxy-beta-oxodihydrochalcone + UDP-alpha-D-glucose = a 3'-(beta-D-glucopyranosyl)-2'-hydroxy-beta-oxodihydrochalcone + UDP + H(+). Functionally, UDP-glucose-dependent glucosyltransferase catalyzing the C-glucosylation of 2-hydroxyflavanones (2-hydroxynaringenin, 2-hydroxyeriodictyol and 2-hydroxypinocembrin) and phloretin. No activity with flavanones, flavones or flavonols. Exhibits C-glycosylation activity toward 2',4',6'-trihydroxyacetophenone and phloretin using UDP-glucose as sugar donor. Can use UDP-galactose as sugar donor, but catalytic efficiency is 14-fold lower toward UDP-galactose than toward UDP-glucose. In Fagopyrum esculentum (Common buckwheat), this protein is UDP-glycosyltransferase 708C1.